The sequence spans 537 residues: uncharacterized protein (537 aa).

It belongs to the RuBisCO large chain family. Type IV subfamily.

Unknown. Probably does not have RuBisCO activity. This is an uncharacterized protein from Symbiodinium sp. (Dinoflagellate).